A 154-amino-acid polypeptide reads, in one-letter code: Heat shock protein beta-3 (154 aa).

Residues 48–71 (ARGAGTPQALAEDSASTEKPPGEG) form a disordered region. The 98-residue stretch at 57–154 (LAEDSASTEK…VEVKDSLGTK (98 aa)) folds into the sHSP domain.

The protein belongs to the small heat shock protein (HSP20) family.

The protein localises to the cytoplasm. It is found in the nucleus. Its function is as follows. Inhibitor of actin polymerization. This chain is Heat shock protein beta-3 (Hspb3), found in Mus musculus (Mouse).